A 151-amino-acid polypeptide reads, in one-letter code: Small ribosomal subunit protein uS11 (151 aa).

The residue at position 16 (serine 16) is a Phosphoserine. Glycyl lysine isopeptide (Lys-Gly) (interchain with G-Cter in SUMO2) cross-links involve residues lysine 61, lysine 63, and lysine 106. Positions 131–151 are disordered; it reads DVTPIPSDSTRRKGGRRGRRL. Threonine 133 is modified (phosphothreonine). Phosphoserine is present on serine 139. Positions 142 to 151 are enriched in basic residues; the sequence is RKGGRRGRRL.

This sequence belongs to the universal ribosomal protein uS11 family. In terms of assembly, component of the small ribosomal subunit. Part of the small subunit (SSU) processome, composed of more than 70 proteins and the RNA chaperone small nucleolar RNA (snoRNA) U3.

The protein localises to the cytoplasm. It is found in the nucleus. The protein resides in the nucleolus. Component of the small ribosomal subunit. The ribosome is a large ribonucleoprotein complex responsible for the synthesis of proteins in the cell. Part of the small subunit (SSU) processome, first precursor of the small eukaryotic ribosomal subunit. During the assembly of the SSU processome in the nucleolus, many ribosome biogenesis factors, an RNA chaperone and ribosomal proteins associate with the nascent pre-rRNA and work in concert to generate RNA folding, modifications, rearrangements and cleavage as well as targeted degradation of pre-ribosomal RNA by the RNA exosome. The polypeptide is Small ribosomal subunit protein uS11 (Rps14) (Mus musculus (Mouse)).